An 80-amino-acid polypeptide reads, in one-letter code: Raniseptin-7 (80 aa).

Residues methionine 1–cysteine 22 form the signal peptide. A propeptide spanning residues glutamate 23–glutamate 49 is cleaved from the precursor. The disordered stretch occupies residues arginine 27–glutamate 46. Residues glutamate 30 to glutamate 44 are compositionally biased toward acidic residues.

The protein belongs to the frog skin active peptide (FSAP) family. Dermaseptin subfamily. As to expression, expressed by the skin glands.

It localises to the secreted. Has antibacterial activity. The sequence is that of Raniseptin-7 from Boana raniceps (Chaco tree frog).